The sequence spans 156 residues: ATP synthase subunit b 2 (156 aa).

The chain crosses the membrane as a helical span at residues 11–31 (LLAFIFFVWFCMKFVWPPIMG).

The protein belongs to the ATPase B chain family. In terms of assembly, F-type ATPases have 2 components, F(1) - the catalytic core - and F(0) - the membrane proton channel. F(1) has five subunits: alpha(3), beta(3), gamma(1), delta(1), epsilon(1). F(0) has three main subunits: a(1), b(2) and c(10-14). The alpha and beta chains form an alternating ring which encloses part of the gamma chain. F(1) is attached to F(0) by a central stalk formed by the gamma and epsilon chains, while a peripheral stalk is formed by the delta and b chains.

It is found in the cell inner membrane. Its function is as follows. F(1)F(0) ATP synthase produces ATP from ADP in the presence of a proton or sodium gradient. F-type ATPases consist of two structural domains, F(1) containing the extramembraneous catalytic core and F(0) containing the membrane proton channel, linked together by a central stalk and a peripheral stalk. During catalysis, ATP synthesis in the catalytic domain of F(1) is coupled via a rotary mechanism of the central stalk subunits to proton translocation. Functionally, component of the F(0) channel, it forms part of the peripheral stalk, linking F(1) to F(0). The sequence is that of ATP synthase subunit b 2 from Pseudoalteromonas atlantica (strain T6c / ATCC BAA-1087).